A 146-amino-acid chain; its full sequence is Large ribosomal subunit protein uL15 (146 aa).

Residues 1-13 (MKLHELKPAEGSR) are compositionally biased toward basic and acidic residues. The disordered stretch occupies residues 1-65 (MKLHELKPAE…PLYRRLPKRG (65 aa)). Composition is skewed to gly residues over residues 21-31 (RGIGSGNGKTA) and 42-52 (SGGGVRPGFEG).

Belongs to the universal ribosomal protein uL15 family. In terms of assembly, part of the 50S ribosomal subunit.

Functionally, binds to the 23S rRNA. This chain is Large ribosomal subunit protein uL15, found in Halalkalibacterium halodurans (strain ATCC BAA-125 / DSM 18197 / FERM 7344 / JCM 9153 / C-125) (Bacillus halodurans).